The following is a 601-amino-acid chain: Threonine dehydratase (601 aa).

The transit peptide at 1 to 51 (MEVLCQAPAGNSNFACNPKFTAIRTRAISSNDTFKVISSTGNNKKMKGAIR) directs the protein to the chloroplast. ACT-like domains are found at residues 427–499 (ALLA…NLTN) and 521–592 (IFCQ…IESL).

It belongs to the serine/threonine dehydratase family. The cofactor is pyridoxal 5'-phosphate.

It is found in the plastid. The protein resides in the chloroplast. The enzyme catalyses L-threonine = 2-oxobutanoate + NH4(+). It participates in amino-acid biosynthesis; L-isoleucine biosynthesis; 2-oxobutanoate from L-threonine: step 1/1. Its function is as follows. Catalyzes the conversion of threonine to alpha-keto butyrate in isoleucine (Ile) biosynthesis. Required for JA-Ile biosynthesis, a signaling molecule involved in defense and resistance to the herbivore Manduca sexta caterpillars. The polypeptide is Threonine dehydratase (Nicotiana attenuata (Coyote tobacco)).